A 247-amino-acid polypeptide reads, in one-letter code: UPF0659 protein C216.03 (247 aa).

Belongs to the UPF0659 family.

It is found in the cytoplasm. Its subcellular location is the nucleus. The chain is UPF0659 protein C216.03 from Schizosaccharomyces pombe (strain 972 / ATCC 24843) (Fission yeast).